A 430-amino-acid polypeptide reads, in one-letter code: S-adenosylmethionine synthase (430 aa).

Position 14 (His14) interacts with ATP. Asp16 is a Mg(2+) binding site. K(+) is bound at residue Glu42. The L-methionine site is built by Glu55 and Gln98. The flexible loop stretch occupies residues 98-108 (QSPDINRGVER). Residues 164–166 (DAK), 254–255 (KF), Asp263, 269–270 (RK), Ala286, and Lys290 contribute to the ATP site. Position 263 (Asp263) interacts with L-methionine. An L-methionine-binding site is contributed by Lys294.

It belongs to the AdoMet synthase family. Homotetramer; dimer of dimers. It depends on Mg(2+) as a cofactor. The cofactor is K(+).

It localises to the cytoplasm. It carries out the reaction L-methionine + ATP + H2O = S-adenosyl-L-methionine + phosphate + diphosphate. It participates in amino-acid biosynthesis; S-adenosyl-L-methionine biosynthesis; S-adenosyl-L-methionine from L-methionine: step 1/1. Its function is as follows. Catalyzes the formation of S-adenosylmethionine (AdoMet) from methionine and ATP. The overall synthetic reaction is composed of two sequential steps, AdoMet formation and the subsequent tripolyphosphate hydrolysis which occurs prior to release of AdoMet from the enzyme. This chain is S-adenosylmethionine synthase, found in Bacteroides thetaiotaomicron (strain ATCC 29148 / DSM 2079 / JCM 5827 / CCUG 10774 / NCTC 10582 / VPI-5482 / E50).